The primary structure comprises 278 residues: Formamidopyrimidine-DNA glycosylase (278 aa).

The active-site Schiff-base intermediate with DNA is Pro-2. The Proton donor role is filled by Glu-3. Lys-60 (proton donor; for beta-elimination activity) is an active-site residue. DNA is bound by residues His-95 and Arg-114. An FPG-type zinc finger spans residues Trp-244–Gly-278. The Proton donor; for delta-elimination activity role is filled by Arg-268.

The protein belongs to the FPG family. In terms of assembly, monomer. Zn(2+) is required as a cofactor.

The enzyme catalyses Hydrolysis of DNA containing ring-opened 7-methylguanine residues, releasing 2,6-diamino-4-hydroxy-5-(N-methyl)formamidopyrimidine.. The catalysed reaction is 2'-deoxyribonucleotide-(2'-deoxyribose 5'-phosphate)-2'-deoxyribonucleotide-DNA = a 3'-end 2'-deoxyribonucleotide-(2,3-dehydro-2,3-deoxyribose 5'-phosphate)-DNA + a 5'-end 5'-phospho-2'-deoxyribonucleoside-DNA + H(+). Its function is as follows. Involved in base excision repair of DNA damaged by oxidation or by mutagenic agents. Acts as a DNA glycosylase that recognizes and removes damaged bases. Has a preference for oxidized purines, such as 7,8-dihydro-8-oxoguanine (8-oxoG). Has AP (apurinic/apyrimidinic) lyase activity and introduces nicks in the DNA strand. Cleaves the DNA backbone by beta-delta elimination to generate a single-strand break at the site of the removed base with both 3'- and 5'-phosphates. This is Formamidopyrimidine-DNA glycosylase from Parasynechococcus marenigrum (strain WH8102).